The sequence spans 141 residues: ATP synthase epsilon chain (141 aa).

This sequence belongs to the ATPase epsilon chain family. F-type ATPases have 2 components, CF(1) - the catalytic core - and CF(0) - the membrane proton channel. CF(1) has five subunits: alpha(3), beta(3), gamma(1), delta(1), epsilon(1). CF(0) has three main subunits: a, b and c.

The protein resides in the cell inner membrane. In terms of biological role, produces ATP from ADP in the presence of a proton gradient across the membrane. This Aromatoleum aromaticum (strain DSM 19018 / LMG 30748 / EbN1) (Azoarcus sp. (strain EbN1)) protein is ATP synthase epsilon chain.